The primary structure comprises 132 residues: ATP synthase epsilon chain, chloroplastic (132 aa).

It belongs to the ATPase epsilon chain family. In terms of assembly, F-type ATPases have 2 components, CF(1) - the catalytic core - and CF(0) - the membrane proton channel. CF(1) has five subunits: alpha(3), beta(3), gamma(1), delta(1), epsilon(1). CF(0) has three main subunits: a, b and c.

It is found in the plastid. Its subcellular location is the chloroplast thylakoid membrane. Its function is as follows. Produces ATP from ADP in the presence of a proton gradient across the membrane. The polypeptide is ATP synthase epsilon chain, chloroplastic (Adiantum capillus-veneris (Maidenhair fern)).